We begin with the raw amino-acid sequence, 299 residues long: dTDP-4-dehydrorhamnose reductase (299 aa).

NADH contacts are provided by residues Gly10–Val12, Asp30, Asp39–Phe40, and Ala63–Thr65. Gln11 to Val12 contributes to the NADPH binding site. NADPH is bound by residues Asp39–Phe40, Ala63–Thr65, and Tyr102. Thr104–Asp105 contacts dTDP-beta-L-rhamnose. The NADH site is built by Tyr128 and Lys132. Residues Tyr128 and Lys132 each contribute to the NADPH site. Tyr128 (proton donor/acceptor) is an active-site residue. Trp153 is a dTDP-beta-L-rhamnose binding site.

It belongs to the dTDP-4-dehydrorhamnose reductase family. As to quaternary structure, homodimer. Mg(2+) serves as cofactor.

It catalyses the reaction dTDP-beta-L-rhamnose + NADP(+) = dTDP-4-dehydro-beta-L-rhamnose + NADPH + H(+). It participates in carbohydrate biosynthesis; dTDP-L-rhamnose biosynthesis. It functions in the pathway bacterial outer membrane biogenesis; LPS O-antigen biosynthesis. In terms of biological role, involved in the biosynthesis of the dTDP-L-rhamnose which is an important component of lipopolysaccharide (LPS). Catalyzes the reduction of dTDP-6-deoxy-L-lyxo-4-hexulose to yield dTDP-L-rhamnose. RmlD uses NADH and NADPH nearly equally well. The polypeptide is dTDP-4-dehydrorhamnose reductase (Escherichia coli (strain K12)).